We begin with the raw amino-acid sequence, 176 residues long: Ribosome maturation factor RimM (176 aa).

Residues D97–F176 form the PRC barrel domain.

The protein belongs to the RimM family. As to quaternary structure, binds ribosomal protein uS19.

It is found in the cytoplasm. In terms of biological role, an accessory protein needed during the final step in the assembly of 30S ribosomal subunit, possibly for assembly of the head region. Essential for efficient processing of 16S rRNA. May be needed both before and after RbfA during the maturation of 16S rRNA. It has affinity for free ribosomal 30S subunits but not for 70S ribosomes. The polypeptide is Ribosome maturation factor RimM (Shewanella frigidimarina (strain NCIMB 400)).